The primary structure comprises 127 residues: Ribosome-binding factor A (127 aa).

This sequence belongs to the RbfA family. Monomer. Binds 30S ribosomal subunits, but not 50S ribosomal subunits or 70S ribosomes.

Its subcellular location is the cytoplasm. Its function is as follows. One of several proteins that assist in the late maturation steps of the functional core of the 30S ribosomal subunit. Associates with free 30S ribosomal subunits (but not with 30S subunits that are part of 70S ribosomes or polysomes). Required for efficient processing of 16S rRNA. May interact with the 5'-terminal helix region of 16S rRNA. The sequence is that of Ribosome-binding factor A from Glaesserella parasuis serovar 5 (strain SH0165) (Haemophilus parasuis).